The sequence spans 74 residues: Protein SOM1, mitochondrial (74 aa).

As to quaternary structure, component of the mitochondrial inner membrane peptidase (IMP) complex which at least consists of IMP1, IMP2 and SOM1.

It is found in the mitochondrion inner membrane. Its function is as follows. Non-catalytic component of the mitochondrial inner membrane peptidase (IMP) complex. IMP catalyzes the removal of signal peptides required for the targeting of proteins from the mitochondrial matrix, across the inner membrane, into the inter-membrane space. SOM1 facilitates cleavage of a subset of IMP substrates. The polypeptide is Protein SOM1, mitochondrial (SOM1) (Saccharomyces cerevisiae (strain ATCC 204508 / S288c) (Baker's yeast)).